A 348-amino-acid polypeptide reads, in one-letter code: MYDFFMTWLLPFLIIVGKTLLLLVVLLVLVAYLLYADRKIWAAVQLRRGPNVVGPWGLLQSFADLIKFVVKEPIIPAGANKGVFLLAPFVSATLALSTWAVIPVSEGWEVAKINVGLLYILAISSLEVYGVIMGGWASNSKYPFLGALRSAAQMVSYEVSIGFVLVTVILISGSLDLTTIVLKQGQGLGTTLGLPFNSFLDWNWLVLFPMFIIFFISALAETNRPPFDLVEAESELVAGHMVEYSSTPYMLFFLGEYVAIVLMCALTTILFLGGWLPPLDVWWLNWIPGVIWFVLKVCFVFFWFAIVKAFVPRYRYDQLMRLGWKVFLPLSLAMVVITAAFLKFTNFV.

8 helical membrane-spanning segments follow: residues 10–30 (LPFL…LVLV), 82–102 (GVFL…WAVI), 115–135 (VGLL…IMGG), 161–181 (IGFV…TTIV), 199–219 (FLDW…ISAL), 251–271 (LFFL…TILF), 287–307 (IPGV…FAIV), and 322–342 (LGWK…AAFL).

The protein belongs to the complex I subunit 1 family. NDH-1 is composed of 14 different subunits. Subunits NuoA, H, J, K, L, M, N constitute the membrane sector of the complex.

Its subcellular location is the cell inner membrane. The enzyme catalyses a quinone + NADH + 5 H(+)(in) = a quinol + NAD(+) + 4 H(+)(out). Its function is as follows. NDH-1 shuttles electrons from NADH, via FMN and iron-sulfur (Fe-S) centers, to quinones in the respiratory chain. The immediate electron acceptor for the enzyme in this species is believed to be ubiquinone. Couples the redox reaction to proton translocation (for every two electrons transferred, four hydrogen ions are translocated across the cytoplasmic membrane), and thus conserves the redox energy in a proton gradient. This subunit may bind ubiquinone. The polypeptide is NADH-quinone oxidoreductase subunit H (Bartonella tribocorum (strain CIP 105476 / IBS 506)).